Here is a 227-residue protein sequence, read N- to C-terminus: 2,3-bisphosphoglycerate-dependent phosphoglycerate mutase (227 aa).

Residues 8 to 15, 21 to 22, Arg58, 110 to 113, Lys121, 137 to 138, and 181 to 182 each bind substrate; these read RHGKSVWN, TG, ERMY, RR, and GN. Catalysis depends on His9, which acts as the Tele-phosphohistidine intermediate. Glu110 acts as the Proton donor/acceptor in catalysis.

It belongs to the phosphoglycerate mutase family. BPG-dependent PGAM subfamily.

The enzyme catalyses (2R)-2-phosphoglycerate = (2R)-3-phosphoglycerate. Its pathway is carbohydrate degradation; glycolysis; pyruvate from D-glyceraldehyde 3-phosphate: step 3/5. Functionally, catalyzes the interconversion of 2-phosphoglycerate and 3-phosphoglycerate. This chain is 2,3-bisphosphoglycerate-dependent phosphoglycerate mutase, found in Chlamydia felis (strain Fe/C-56) (Chlamydophila felis).